We begin with the raw amino-acid sequence, 287 residues long: Prepilin leader peptidase/N-methyltransferase (287 aa).

Residues 12–32 (FMYLVVGLFSLAVGSLLNVII) form a helical membrane-spanning segment. Residues cysteine 71, cysteine 74, cysteine 96, and cysteine 99 each coordinate Zn(2+). A run of 5 helical transmembrane segments spans residues 127 to 147 (FTIQ…LVFI), 158 to 178 (LTLG…FVSL), 182 to 202 (VLSC…FYLM), 215 to 235 (LFAA…LLIS), and 259 to 279 (PFGP…DSII).

This sequence belongs to the peptidase A24 family. The cofactor is Zn(2+).

The protein localises to the cell inner membrane. The catalysed reaction is Typically cleaves a -Gly-|-Phe- bond to release an N-terminal, basic peptide of 5-8 residues from type IV prepilin, and then N-methylates the new N-terminal amino group, the methyl donor being S-adenosyl-L-methionine.. Plays an essential role in type IV pili and type II pseudopili formation by proteolytically removing the leader sequence from substrate proteins and subsequently monomethylating the alpha-amino group of the newly exposed N-terminal phenylalanine. The polypeptide is Prepilin leader peptidase/N-methyltransferase (pilD) (Legionella pneumophila).